The chain runs to 188 residues: dCTP deaminase (188 aa).

DCTP is bound by residues 111–116 (KSTYAR), 135–137 (TLE), Gln156, Tyr170, Lys179, and Gln180. Residue Glu137 is the Proton donor/acceptor of the active site.

This sequence belongs to the dCTP deaminase family. As to quaternary structure, homotrimer.

The enzyme catalyses dCTP + H2O + H(+) = dUTP + NH4(+). It participates in pyrimidine metabolism; dUMP biosynthesis; dUMP from dCTP (dUTP route): step 1/2. Functionally, catalyzes the deamination of dCTP to dUTP. This Rickettsia canadensis (strain McKiel) protein is dCTP deaminase.